The sequence spans 247 residues: MKFFQEKISIKETNILLKVDNPKFFKMAKNTIINERLNLENYILRNPIFLTSYSPVEVPDNAPEIIKLMAEAGFNADVGPMAAVAGTFSQLIIENLIENDCKNAISENGGDICLKCEMDTTVGLYAGNSSLSGNLGFKLKKEKMKNGYGICTSSGTVGHSVSLGNADSITVFSKSAIIADAAATSIGNFAVGNAVDAINKCLEKAETISKIDGVFVCMGEHAGKIGKIPQLIKTDKKEVLGNVFEMV.

It belongs to the UPF0280 family.

The chain is UPF0280 protein MMP1236 from Methanococcus maripaludis (strain DSM 14266 / JCM 13030 / NBRC 101832 / S2 / LL).